We begin with the raw amino-acid sequence, 253 residues long: Sulfate transporter CysZ (253 aa).

The next 4 helical transmembrane spans lie at 31–51 (FVIL…WWLF), 75–95 (LLWP…FSTI), 151–171 (IVLL…PVLW), and 222–242 (IPLL…AMWV).

Belongs to the CysZ family.

It is found in the cell inner membrane. Its function is as follows. High affinity, high specificity proton-dependent sulfate transporter, which mediates sulfate uptake. Provides the sulfur source for the cysteine synthesis pathway. In Escherichia coli (strain 55989 / EAEC), this protein is Sulfate transporter CysZ.